The chain runs to 284 residues: Cysteine-rich repeat secretory protein 8 (284 aa).

Residues 1–27 (MATFIRFTAPLFCFFFLFSLFSHQTMS) form the signal peptide. Gnk2-homologous domains are found at residues 32 to 136 (MATF…NVSF) and 151 to 259 (SLAT…TTGL).

Belongs to the cysteine-rich repeat secretory protein family.

The protein resides in the secreted. The chain is Cysteine-rich repeat secretory protein 8 (CRRSP8) from Arabidopsis thaliana (Mouse-ear cress).